The primary structure comprises 148 residues: RING finger protein 24 (148 aa).

A helical membrane pass occupies residues 24-44 (IYIVVFGTAIFVFILSLLFCC). The RING-type zinc-finger motif lies at 78–119 (CAVCLEDFKPRDELGICPCKHAFHRKCLIKWLEVRKVCPLCN).

As to quaternary structure, interacts with TRPC1, TRPC3, TRPC4, TRPC5, TRPC6 and TRPC7.

Its subcellular location is the golgi apparatus membrane. In terms of biological role, may play a role in TRPCs intracellular trafficking. This is RING finger protein 24 (RNF24) from Homo sapiens (Human).